A 205-amino-acid polypeptide reads, in one-letter code: Large ribosomal subunit protein uL3c (205 aa).

The interval 127 to 153 (HFSRGPMSHGSKNHRQPGSIGAGTTPG) is disordered.

This sequence belongs to the universal ribosomal protein uL3 family. As to quaternary structure, part of the 50S ribosomal subunit.

It localises to the plastid. The protein localises to the chloroplast. Functionally, one of the primary rRNA binding proteins, it binds directly near the 3'-end of the 23S rRNA, where it nucleates assembly of the 50S subunit. The polypeptide is Large ribosomal subunit protein uL3c (rpl3) (Porphyra purpurea (Red seaweed)).